Reading from the N-terminus, the 85-residue chain is Small ribosomal subunit protein bS16c (85 aa).

This sequence belongs to the bacterial ribosomal protein bS16 family.

Its subcellular location is the plastid. It is found in the chloroplast. The sequence is that of Small ribosomal subunit protein bS16c from Saccharum hybrid (Sugarcane).